Here is a 315-residue protein sequence, read N- to C-terminus: Protoheme IX farnesyltransferase 1 (315 aa).

A run of 9 helical transmembrane segments spans residues 25–45, 49–69, 87–107, 120–139, 145–165, 176–196, 220–240, 242–262, and 280–300; these read PGII…AAKG, LALM…GCAV, RVTV…LALG, ALAL…VYSL, SVYG…VGYC, AILL…IAIF, LHIV…PLAG, TGIA…AMAL, and GFSI…SQVI.

This sequence belongs to the UbiA prenyltransferase family. Protoheme IX farnesyltransferase subfamily.

It is found in the cell inner membrane. The enzyme catalyses heme b + (2E,6E)-farnesyl diphosphate + H2O = Fe(II)-heme o + diphosphate. Its pathway is porphyrin-containing compound metabolism; heme O biosynthesis; heme O from protoheme: step 1/1. In terms of biological role, converts heme B (protoheme IX) to heme O by substitution of the vinyl group on carbon 2 of heme B porphyrin ring with a hydroxyethyl farnesyl side group. This Shewanella sp. (strain W3-18-1) protein is Protoheme IX farnesyltransferase 1.